The sequence spans 207 residues: Ribonuclease HII (207 aa).

The RNase H type-2 domain occupies 20 to 207 (QLFAGVDEVG…KPVKRVLGIE (188 aa)). 3 residues coordinate a divalent metal cation: D26, E27, and D118.

The protein belongs to the RNase HII family. Requires Mn(2+) as cofactor. Mg(2+) is required as a cofactor.

Its subcellular location is the cytoplasm. The catalysed reaction is Endonucleolytic cleavage to 5'-phosphomonoester.. In terms of biological role, endonuclease that specifically degrades the RNA of RNA-DNA hybrids. The protein is Ribonuclease HII of Aliivibrio fischeri (strain MJ11) (Vibrio fischeri).